Here is a 170-residue protein sequence, read N- to C-terminus: Siroheme decarboxylase NirL subunit (170 aa).

The protein belongs to the Ahb/Nir family. In terms of assembly, probably forms a complex composed of NirD, NirL, NirG and NirH. All proteins are required for the total conversion of siroheme to didecarboxysiroheme.

It carries out the reaction siroheme + 2 H(+) = 12,18-didecarboxysiroheme + 2 CO2. Its pathway is porphyrin-containing compound metabolism. Its function is as follows. Involved in heme d1 biosynthesis. Catalyzes the decarboxylation of siroheme into didecarboxysiroheme. The polypeptide is Siroheme decarboxylase NirL subunit (Stutzerimonas stutzeri (Pseudomonas stutzeri)).